The chain runs to 72 residues: Translation initiation factor IF-1 (72 aa).

One can recognise an S1-like domain in the interval 1–72 (MAKQDVIELE…TRGRITYRYK (72 aa)).

The protein belongs to the IF-1 family. Component of the 30S ribosomal translation pre-initiation complex which assembles on the 30S ribosome in the order IF-2 and IF-3, IF-1 and N-formylmethionyl-tRNA(fMet); mRNA recruitment can occur at any time during PIC assembly.

It is found in the cytoplasm. Functionally, one of the essential components for the initiation of protein synthesis. Stabilizes the binding of IF-2 and IF-3 on the 30S subunit to which N-formylmethionyl-tRNA(fMet) subsequently binds. Helps modulate mRNA selection, yielding the 30S pre-initiation complex (PIC). Upon addition of the 50S ribosomal subunit IF-1, IF-2 and IF-3 are released leaving the mature 70S translation initiation complex. This is Translation initiation factor IF-1 from Staphylococcus aureus (strain USA300 / TCH1516).